Here is a 488-residue protein sequence, read N- to C-terminus: Glutamyl-tRNA(Gln) amidotransferase subunit A (488 aa).

Active-site charge relay system residues include Lys-78 and Ser-153. Residue Ser-177 is the Acyl-ester intermediate of the active site.

Belongs to the amidase family. GatA subfamily. In terms of assembly, heterotrimer of A, B and C subunits.

The catalysed reaction is L-glutamyl-tRNA(Gln) + L-glutamine + ATP + H2O = L-glutaminyl-tRNA(Gln) + L-glutamate + ADP + phosphate + H(+). In terms of biological role, allows the formation of correctly charged Gln-tRNA(Gln) through the transamidation of misacylated Glu-tRNA(Gln) in organisms which lack glutaminyl-tRNA synthetase. The reaction takes place in the presence of glutamine and ATP through an activated gamma-phospho-Glu-tRNA(Gln). This chain is Glutamyl-tRNA(Gln) amidotransferase subunit A, found in Caldanaerobacter subterraneus subsp. tengcongensis (strain DSM 15242 / JCM 11007 / NBRC 100824 / MB4) (Thermoanaerobacter tengcongensis).